We begin with the raw amino-acid sequence, 429 residues long: Citrate synthase, plasmid (429 aa).

Residues His306 and Asp364 contribute to the active site.

The protein belongs to the citrate synthase family.

The catalysed reaction is oxaloacetate + acetyl-CoA + H2O = citrate + CoA + H(+). The protein operates within carbohydrate metabolism; tricarboxylic acid cycle; isocitrate from oxaloacetate: step 1/2. The exact function of the plasmid-encoded citrate synthase is not clear, it could help nodulation by allowing the bacteria to use citrate as a chelator of iron and calcium. This is Citrate synthase, plasmid (pcsA) from Rhizobium tropici.